We begin with the raw amino-acid sequence, 279 residues long: Energy-coupling factor transporter ATP-binding protein EcfA (279 aa).

One can recognise an ABC transporter domain in the interval 4–239; it reads VETKDLYFRY…VETIRKANLR (236 aa). Residue 37–44 participates in ATP binding; the sequence is GPNGAGKS.

This sequence belongs to the ABC transporter superfamily. Energy-coupling factor EcfA family. Forms a stable energy-coupling factor (ECF) transporter complex composed of 2 membrane-embedded substrate-binding proteins (S component), 2 ATP-binding proteins (A component) and 2 transmembrane proteins (T component).

Its subcellular location is the cell membrane. Functionally, ATP-binding (A) component of a common energy-coupling factor (ECF) ABC-transporter complex. Unlike classic ABC transporters this ECF transporter provides the energy necessary to transport a number of different substrates. The protein is Energy-coupling factor transporter ATP-binding protein EcfA of Methanocaldococcus jannaschii (strain ATCC 43067 / DSM 2661 / JAL-1 / JCM 10045 / NBRC 100440) (Methanococcus jannaschii).